The following is a 530-amino-acid chain: Autoinducer-2 kinase (530 aa).

This sequence belongs to the FGGY kinase family.

Its subcellular location is the cytoplasm. It carries out the reaction (S)-4,5-dihydroxypentane-2,3-dione + ATP = (2S)-2-hydroxy-3,4-dioxopentyl phosphate + ADP + H(+). Functionally, catalyzes the phosphorylation of autoinducer-2 (AI-2) to phospho-AI-2, which subsequently inactivates the transcriptional regulator LsrR and leads to the transcription of the lsr operon. Phosphorylates the ring-open form of (S)-4,5-dihydroxypentane-2,3-dione (DPD), which is the precursor to all AI-2 signaling molecules, at the C5 position. This Escherichia coli O139:H28 (strain E24377A / ETEC) protein is Autoinducer-2 kinase.